An 80-amino-acid chain; its full sequence is WAP four-disulfide core domain protein 15A (80 aa).

The N-terminal stretch at 1-20 is a signal peptide; that stretch reads MKPSSLLLFTTTILLCLSMA. Residues 29–76 form the WAP domain; sequence VTPKQGYCPEFLLDCPFVLLPVCSRDKGCKGTKKCCFYYCQMRCVEPW. Intrachain disulfides connect C36-C64, C43-C68, C51-C63, and C57-C72.

It localises to the secreted. Functionally, antibacterial protein. The chain is WAP four-disulfide core domain protein 15A from Mus musculus (Mouse).